The chain runs to 198 residues: IMP cyclohydrolase (198 aa).

The protein belongs to the archaeal IMP cyclohydrolase family.

The enzyme catalyses IMP + H2O = 5-formamido-1-(5-phospho-D-ribosyl)imidazole-4-carboxamide. The protein operates within purine metabolism; IMP biosynthesis via de novo pathway; IMP from 5-formamido-1-(5-phospho-D-ribosyl)imidazole-4-carboxamide: step 1/1. Catalyzes the cyclization of 5-formylamidoimidazole-4-carboxamide ribonucleotide to IMP. In Methanopyrus kandleri (strain AV19 / DSM 6324 / JCM 9639 / NBRC 100938), this protein is IMP cyclohydrolase.